Reading from the N-terminus, the 209-residue chain is Uracil phosphoribosyltransferase (209 aa).

5-phospho-alpha-D-ribose 1-diphosphate-binding positions include arginine 79, arginine 104, and 131–139; that span reads DPMLATGGS. Residues isoleucine 194 and 199 to 201 each bind uracil; that span reads GDA. Aspartate 200 lines the 5-phospho-alpha-D-ribose 1-diphosphate pocket.

Belongs to the UPRTase family. Mg(2+) serves as cofactor.

It catalyses the reaction UMP + diphosphate = 5-phospho-alpha-D-ribose 1-diphosphate + uracil. It functions in the pathway pyrimidine metabolism; UMP biosynthesis via salvage pathway; UMP from uracil: step 1/1. With respect to regulation, allosterically activated by GTP. Functionally, catalyzes the conversion of uracil and 5-phospho-alpha-D-ribose 1-diphosphate (PRPP) to UMP and diphosphate. This chain is Uracil phosphoribosyltransferase, found in Lactobacillus delbrueckii subsp. bulgaricus (strain ATCC 11842 / DSM 20081 / BCRC 10696 / JCM 1002 / NBRC 13953 / NCIMB 11778 / NCTC 12712 / WDCM 00102 / Lb 14).